The sequence spans 373 residues: Dual-specificity RNA methyltransferase RlmN (373 aa).

The Proton acceptor role is filled by Glu94. The region spanning 100 to 339 (EDDRATLCVS…VIVRKTRGDD (240 aa)) is the Radical SAM core domain. A disulfide bridge connects residues Cys107 and Cys344. Residues Cys114, Cys118, and Cys121 each coordinate [4Fe-4S] cluster. S-adenosyl-L-methionine contacts are provided by residues 168–169 (GE), Ser200, 222–224 (SIH), and Asn301. The active-site S-methylcysteine intermediate is Cys344.

Belongs to the radical SAM superfamily. RlmN family. The cofactor is [4Fe-4S] cluster.

Its subcellular location is the cytoplasm. The enzyme catalyses adenosine(2503) in 23S rRNA + 2 reduced [2Fe-2S]-[ferredoxin] + 2 S-adenosyl-L-methionine = 2-methyladenosine(2503) in 23S rRNA + 5'-deoxyadenosine + L-methionine + 2 oxidized [2Fe-2S]-[ferredoxin] + S-adenosyl-L-homocysteine. It catalyses the reaction adenosine(37) in tRNA + 2 reduced [2Fe-2S]-[ferredoxin] + 2 S-adenosyl-L-methionine = 2-methyladenosine(37) in tRNA + 5'-deoxyadenosine + L-methionine + 2 oxidized [2Fe-2S]-[ferredoxin] + S-adenosyl-L-homocysteine. Its function is as follows. Specifically methylates position 2 of adenine 2503 in 23S rRNA and position 2 of adenine 37 in tRNAs. m2A2503 modification seems to play a crucial role in the proofreading step occurring at the peptidyl transferase center and thus would serve to optimize ribosomal fidelity. This chain is Dual-specificity RNA methyltransferase RlmN, found in Shewanella sp. (strain MR-4).